We begin with the raw amino-acid sequence, 258 residues long: Ribosomal RNA large subunit methyltransferase E (258 aa).

S-adenosyl-L-methionine-binding residues include Gly58, Trp60, Asp78, Asp96, and Asp120. Lys160 serves as the catalytic Proton acceptor.

The protein belongs to the class I-like SAM-binding methyltransferase superfamily. RNA methyltransferase RlmE family.

It is found in the cytoplasm. It catalyses the reaction uridine(2552) in 23S rRNA + S-adenosyl-L-methionine = 2'-O-methyluridine(2552) in 23S rRNA + S-adenosyl-L-homocysteine + H(+). Its function is as follows. Specifically methylates the uridine in position 2552 of 23S rRNA at the 2'-O position of the ribose in the fully assembled 50S ribosomal subunit. The chain is Ribosomal RNA large subunit methyltransferase E from Methanococcus maripaludis (strain C5 / ATCC BAA-1333).